A 363-amino-acid chain; its full sequence is Chorismate synthase (363 aa).

NADP(+) contacts are provided by R48 and R54. FMN-binding positions include 125 to 127, 237 to 238, G277, 292 to 296, and R318; these read RSS, NA, and KPTSS.

This sequence belongs to the chorismate synthase family. Homotetramer. FMNH2 is required as a cofactor.

It catalyses the reaction 5-O-(1-carboxyvinyl)-3-phosphoshikimate = chorismate + phosphate. It functions in the pathway metabolic intermediate biosynthesis; chorismate biosynthesis; chorismate from D-erythrose 4-phosphate and phosphoenolpyruvate: step 7/7. Its function is as follows. Catalyzes the anti-1,4-elimination of the C-3 phosphate and the C-6 proR hydrogen from 5-enolpyruvylshikimate-3-phosphate (EPSP) to yield chorismate, which is the branch point compound that serves as the starting substrate for the three terminal pathways of aromatic amino acid biosynthesis. This reaction introduces a second double bond into the aromatic ring system. The chain is Chorismate synthase from Pseudomonas putida (strain W619).